Reading from the N-terminus, the 335-residue chain is tRNA N6-adenosine threonylcarbamoyltransferase (335 aa).

Positions 107 and 111 each coordinate Fe cation. Substrate contacts are provided by residues 129–133, D162, G175, and N268; that span reads LVSGG. Residue D296 coordinates Fe cation.

This sequence belongs to the KAE1 / TsaD family. Fe(2+) is required as a cofactor.

Its subcellular location is the cytoplasm. The catalysed reaction is L-threonylcarbamoyladenylate + adenosine(37) in tRNA = N(6)-L-threonylcarbamoyladenosine(37) in tRNA + AMP + H(+). In terms of biological role, required for the formation of a threonylcarbamoyl group on adenosine at position 37 (t(6)A37) in tRNAs that read codons beginning with adenine. Is involved in the transfer of the threonylcarbamoyl moiety of threonylcarbamoyl-AMP (TC-AMP) to the N6 group of A37, together with TsaE and TsaB. TsaD likely plays a direct catalytic role in this reaction. This is tRNA N6-adenosine threonylcarbamoyltransferase from Campylobacter fetus subsp. fetus (strain 82-40).